The sequence spans 68 residues: Conotoxin Mi11.1 (68 aa).

The N-terminal stretch at 1 to 26 (MMLRLTSVSCFLLVIACLNLFQVVLT) is a signal peptide. Cystine bridges form between Cys-29–Cys-43, Cys-36–Cys-48, Cys-42–Cys-52, and Cys-47–Cys-56. At Tyr-60 the chain carries Tyrosine amide. A propeptide spanning residues 64 to 68 (ATFQE) is cleaved from the precursor.

Belongs to the conotoxin I2 superfamily. Expressed by the venom duct.

The protein localises to the secreted. In Conus miles (Soldier cone), this protein is Conotoxin Mi11.1.